The sequence spans 295 residues: Malonyl-[acyl-carrier protein] O-methyltransferase (295 aa).

This sequence belongs to the methyltransferase superfamily.

The enzyme catalyses malonyl-[ACP] + S-adenosyl-L-methionine = malonyl-[ACP] methyl ester + S-adenosyl-L-homocysteine. Its pathway is cofactor biosynthesis; biotin biosynthesis. In terms of biological role, converts the free carboxyl group of a malonyl-thioester to its methyl ester by transfer of a methyl group from S-adenosyl-L-methionine (SAM). It allows to synthesize pimeloyl-ACP via the fatty acid synthetic pathway. This chain is Malonyl-[acyl-carrier protein] O-methyltransferase, found in Halorhodospira halophila (strain DSM 244 / SL1) (Ectothiorhodospira halophila (strain DSM 244 / SL1)).